We begin with the raw amino-acid sequence, 443 residues long: Tol-Pal system protein TolB (443 aa).

Positions 1–18 are cleaved as a signal peptide; the sequence is MRNIVYFILTLFSLTSYA.

The protein belongs to the TolB family. The Tol-Pal system is composed of five core proteins: the inner membrane proteins TolA, TolQ and TolR, the periplasmic protein TolB and the outer membrane protein Pal. They form a network linking the inner and outer membranes and the peptidoglycan layer.

The protein resides in the periplasm. Functionally, part of the Tol-Pal system, which plays a role in outer membrane invagination during cell division and is important for maintaining outer membrane integrity. The sequence is that of Tol-Pal system protein TolB from Rickettsia prowazekii (strain Madrid E).